Reading from the N-terminus, the 351-residue chain is S-adenosylmethionine:tRNA ribosyltransferase-isomerase (351 aa).

This sequence belongs to the QueA family. As to quaternary structure, monomer.

It localises to the cytoplasm. It catalyses the reaction 7-aminomethyl-7-carbaguanosine(34) in tRNA + S-adenosyl-L-methionine = epoxyqueuosine(34) in tRNA + adenine + L-methionine + 2 H(+). It functions in the pathway tRNA modification; tRNA-queuosine biosynthesis. Transfers and isomerizes the ribose moiety from AdoMet to the 7-aminomethyl group of 7-deazaguanine (preQ1-tRNA) to give epoxyqueuosine (oQ-tRNA). The chain is S-adenosylmethionine:tRNA ribosyltransferase-isomerase from Phocaeicola vulgatus (strain ATCC 8482 / DSM 1447 / JCM 5826 / CCUG 4940 / NBRC 14291 / NCTC 11154) (Bacteroides vulgatus).